The sequence spans 343 residues: Holliday junction branch migration complex subunit RuvB (343 aa).

Residues 1-186 (MTEEFDIRQE…FGINLHLEYY (186 aa)) are large ATPase domain (RuvB-L). Residues Leu25, Arg26, Gly67, Lys70, Thr71, Thr72, 133-135 (EDY), Arg176, Tyr186, and Arg223 each bind ATP. Mg(2+) is bound at residue Thr71. The interval 187–257 (DVHTITGIVE…IACYALEALN (71 aa)) is small ATPAse domain (RuvB-S). Positions 260–343 (RYGLDNVDHK…PRPHRPSLFD (84 aa)) are head domain (RuvB-H). Residues Arg315 and Arg320 each coordinate DNA.

The protein belongs to the RuvB family. In terms of assembly, homohexamer. Forms an RuvA(8)-RuvB(12)-Holliday junction (HJ) complex. HJ DNA is sandwiched between 2 RuvA tetramers; dsDNA enters through RuvA and exits via RuvB. An RuvB hexamer assembles on each DNA strand where it exits the tetramer. Each RuvB hexamer is contacted by two RuvA subunits (via domain III) on 2 adjacent RuvB subunits; this complex drives branch migration. In the full resolvosome a probable DNA-RuvA(4)-RuvB(12)-RuvC(2) complex forms which resolves the HJ.

The protein resides in the cytoplasm. It carries out the reaction ATP + H2O = ADP + phosphate + H(+). In terms of biological role, the RuvA-RuvB-RuvC complex processes Holliday junction (HJ) DNA during genetic recombination and DNA repair, while the RuvA-RuvB complex plays an important role in the rescue of blocked DNA replication forks via replication fork reversal (RFR). RuvA specifically binds to HJ cruciform DNA, conferring on it an open structure. The RuvB hexamer acts as an ATP-dependent pump, pulling dsDNA into and through the RuvAB complex. RuvB forms 2 homohexamers on either side of HJ DNA bound by 1 or 2 RuvA tetramers; 4 subunits per hexamer contact DNA at a time. Coordinated motions by a converter formed by DNA-disengaged RuvB subunits stimulates ATP hydrolysis and nucleotide exchange. Immobilization of the converter enables RuvB to convert the ATP-contained energy into a lever motion, pulling 2 nucleotides of DNA out of the RuvA tetramer per ATP hydrolyzed, thus driving DNA branch migration. The RuvB motors rotate together with the DNA substrate, which together with the progressing nucleotide cycle form the mechanistic basis for DNA recombination by continuous HJ branch migration. Branch migration allows RuvC to scan DNA until it finds its consensus sequence, where it cleaves and resolves cruciform DNA. In Porphyromonas gingivalis (strain ATCC BAA-308 / W83), this protein is Holliday junction branch migration complex subunit RuvB.